We begin with the raw amino-acid sequence, 196 residues long: Pyridoxal 5'-phosphate synthase subunit PdxT (196 aa).

47-49 (GES) is a binding site for L-glutamine. Residue C79 is the Nucleophile of the active site. L-glutamine-binding positions include R106 and 134 to 135 (IR). Residues H170 and E172 each act as charge relay system in the active site.

The protein belongs to the glutaminase PdxT/SNO family. In the presence of PdxS, forms a dodecamer of heterodimers. Only shows activity in the heterodimer.

The catalysed reaction is aldehydo-D-ribose 5-phosphate + D-glyceraldehyde 3-phosphate + L-glutamine = pyridoxal 5'-phosphate + L-glutamate + phosphate + 3 H2O + H(+). The enzyme catalyses L-glutamine + H2O = L-glutamate + NH4(+). It functions in the pathway cofactor biosynthesis; pyridoxal 5'-phosphate biosynthesis. Its function is as follows. Catalyzes the hydrolysis of glutamine to glutamate and ammonia as part of the biosynthesis of pyridoxal 5'-phosphate. The resulting ammonia molecule is channeled to the active site of PdxS. This is Pyridoxal 5'-phosphate synthase subunit PdxT from Bacillus anthracis (strain A0248).